The following is a 316-amino-acid chain: Serpentine receptor class delta-45 (316 aa).

7 helical membrane-spanning segments follow: residues 8-28 (VFYP…IFII), 42-62 (ILLV…LIQI), 91-111 (YFLT…TIYL), 128-148 (VTFF…SLIL), 184-204 (IIIT…GLLL), 234-254 (LQVF…LVLA), and 266-286 (FFSV…LYSV).

It belongs to the nematode receptor-like protein srd family.

The protein resides in the membrane. The polypeptide is Serpentine receptor class delta-45 (srd-45) (Caenorhabditis elegans).